The chain runs to 561 residues: Alpha-1D adrenergic receptor (561 aa).

Residues 1-90 (MTFRDILSVT…VGGLVVSAQG (90 aa)) lie on the Extracellular side of the membrane. Residues 10 to 71 (TFEGPRSSSS…SSTGEPGAAA (62 aa)) form a disordered region. Residues 21-56 (GGSGAGGGAGTVGPEGGAVGGVPGATGGGAVVGTGS) are compositionally biased toward gly residues. Residues Asn60 and Asn76 are each glycosylated (N-linked (GlcNAc...) asparagine). A helical membrane pass occupies residues 91-115 (VGVGVFLAAFILTAVAGNLLVILSV). Residues 116–127 (ACNRHLQTVTNY) lie on the Cytoplasmic side of the membrane. The helical transmembrane segment at 128–153 (FIVNLAVADLLLSAAVLPFSATMEVL) threads the bilayer. Over 154–163 (GFWAFGRTFC) the chain is Extracellular. Residues 164 to 186 (DVWAAVDVLCCTASILSLCTISV) traverse the membrane as a helical segment. Topologically, residues 187-207 (DRYVGVRHSLKYPAIMTERKA) are cytoplasmic. The helical transmembrane segment at 208–232 (AAILALLWAVALVVSVGPLLGWKEP) threads the bilayer. The Extracellular segment spans residues 233–245 (VPPDERFCGITEE). Residues 246 to 269 (VGYAIFSSVCSFYLPMAVIVVMYC) traverse the membrane as a helical segment. Residues 270–342 (RVYVVARSTT…KFSREKKAAK (73 aa)) are Cytoplasmic-facing. The helical transmembrane segment at 343 to 367 (TLAIVVGVFVLCWFPFFFVLPLGSL) threads the bilayer. Over 368 to 374 (FPQLKPS) the chain is Extracellular. Residues 375 to 399 (EGVFKVIFWLGYFNSCVNPLIYPCS) traverse the membrane as a helical segment. Residues 400 to 561 (SREFKRAFLR…DYSNLRETDI (162 aa)) lie on the Cytoplasmic side of the membrane. Cys413 is lipidated: S-palmitoyl cysteine. The tract at residues 452–481 (APLALTAHPGAGSADTPETQDSVSSSRKPA) is disordered. A compositionally biased stretch (polar residues) spans 467–479 (TPETQDSVSSSRK).

Belongs to the G-protein coupled receptor 1 family. Adrenergic receptor subfamily. ADRA1D sub-subfamily. Interacts with FLNA (via filamin repeat 21); increases PKA-mediated phosphorylation of FLNA. Palmitoylated. Palmitoylation by ZDHHC21 may increase the expression of the receptor and regulate downstream signaling. In terms of tissue distribution, vas deferens, hippocampus, cerebral cortex, aorta, brain stem, heart and spleen.

The protein localises to the cell membrane. Functionally, this alpha-adrenergic receptor mediates its effect through the influx of extracellular calcium. This Rattus norvegicus (Rat) protein is Alpha-1D adrenergic receptor (Adra1d).